The sequence spans 334 residues: Cathepsin J (334 aa).

A signal peptide spans Met1 to Gly17. A propeptide spans Ala18–Gly113 (activation peptide). Asn72 carries an N-linked (GlcNAc...) asparagine glycan. 2 disulfide bridges follow: Cys135-Cys178 and Cys169-Cys211. Residue Cys138 is part of the active site. Asn217, Asn221, and Asn268 each carry an N-linked (GlcNAc...) asparagine glycan. Cys269 and Cys322 form a disulfide bridge. Residues His276 and Asn300 contribute to the active site.

It belongs to the peptidase C1 family. Expressed specifically in placenta.

It is found in the lysosome. The polypeptide is Cathepsin J (Ctsj) (Mus musculus (Mouse)).